The following is a 191-amino-acid chain: Fe/S biogenesis protein NfuA (191 aa).

[4Fe-4S] cluster-binding residues include Cys149 and Cys152.

This sequence belongs to the NfuA family. As to quaternary structure, homodimer. [4Fe-4S] cluster serves as cofactor.

Involved in iron-sulfur cluster biogenesis. Binds a 4Fe-4S cluster, can transfer this cluster to apoproteins, and thereby intervenes in the maturation of Fe/S proteins. Could also act as a scaffold/chaperone for damaged Fe/S proteins. The sequence is that of Fe/S biogenesis protein NfuA from Yersinia enterocolitica serotype O:8 / biotype 1B (strain NCTC 13174 / 8081).